The following is a 151-amino-acid chain: Small ribosomal subunit protein uS15 (151 aa).

A compositionally biased stretch (basic residues) spans 1-11 (MPHRSRHKKGR). Residues 1 to 24 (MPHRSRHKKGRSSSVRPPHPTVPT) form a disordered region.

Belongs to the universal ribosomal protein uS15 family. As to quaternary structure, part of the 30S ribosomal subunit.

The sequence is that of Small ribosomal subunit protein uS15 from Pyrobaculum calidifontis (strain DSM 21063 / JCM 11548 / VA1).